The primary structure comprises 395 residues: Ribose-phosphate pyrophosphokinase 2, chloroplastic (395 aa).

Positions 1–23 are enriched in low complexity; it reads MASPAPRSLSSSSSSSSSSFCPS. The disordered stretch occupies residues 1–33; it reads MASPAPRSLSSSSSSSSSSFCPSISPPPRSPSR. Residues 1 to 42 constitute a chloroplast transit peptide; it reads MASPAPRSLSSSSSSSSSSFCPSISPPPRSPSRASLPFSVKC. Positions 209, 211, 220, and 224 each coordinate Mg(2+). Positions 295–310 are binding of phosphoribosylpyrophosphate; it reads GKVAVMLDDMIDTAGT.

This sequence belongs to the ribose-phosphate pyrophosphokinase family.

It localises to the plastid. The protein localises to the chloroplast. The catalysed reaction is D-ribose 5-phosphate + ATP = 5-phospho-alpha-D-ribose 1-diphosphate + AMP + H(+). In Spinacia oleracea (Spinach), this protein is Ribose-phosphate pyrophosphokinase 2, chloroplastic (PRS2).